A 280-amino-acid polypeptide reads, in one-letter code: NAD-capped RNA hydrolase NudC (280 aa).

Residue Arg-83 participates in substrate binding. Zn(2+) is bound by residues Cys-113, Cys-116, Cys-131, and Cys-134. Tyr-139 is a binding site for substrate. The Nudix hydrolase domain occupies 140-268 (PRVAPAIIVL…ASRRLLDDAL (129 aa)). A divalent metal cation is bound by residues Ala-177, Glu-193, and Glu-197. A Nudix box motif is present at residues 178–199 (GFVEPSETLEAAVHREVGEEVG). Residue 211–218 (QPWPFPHS) participates in substrate binding. Glu-238 provides a ligand contact to a divalent metal cation.

The protein belongs to the Nudix hydrolase family. NudC subfamily. In terms of assembly, homodimer. It depends on Mg(2+) as a cofactor. Requires Mn(2+) as cofactor. Zn(2+) serves as cofactor.

It catalyses the reaction a 5'-end NAD(+)-phospho-ribonucleoside in mRNA + H2O = a 5'-end phospho-adenosine-phospho-ribonucleoside in mRNA + beta-nicotinamide D-ribonucleotide + 2 H(+). It carries out the reaction NAD(+) + H2O = beta-nicotinamide D-ribonucleotide + AMP + 2 H(+). The enzyme catalyses NADH + H2O = reduced beta-nicotinamide D-ribonucleotide + AMP + 2 H(+). In terms of biological role, mRNA decapping enzyme that specifically removes the nicotinamide adenine dinucleotide (NAD) cap from a subset of mRNAs by hydrolyzing the diphosphate linkage to produce nicotinamide mononucleotide (NMN) and 5' monophosphate mRNA. The NAD-cap is present at the 5'-end of some mRNAs and stabilizes RNA against 5'-processing. Has preference for mRNAs with a 5'-end purine. Catalyzes the hydrolysis of a broad range of dinucleotide pyrophosphates. This chain is NAD-capped RNA hydrolase NudC, found in Deinococcus radiodurans (strain ATCC 13939 / DSM 20539 / JCM 16871 / CCUG 27074 / LMG 4051 / NBRC 15346 / NCIMB 9279 / VKM B-1422 / R1).